The following is an 825-amino-acid chain: Osmosensitive cation channel TMEM63C (825 aa).

At 1 to 50 (MAFESWPAGGVRPVEELDVRSFLMEENSTAERCYRSHSRSSVLQGLPFGG) the chain is on the extracellular side. A helical transmembrane segment spans residues 51–75 (VPTVLAINVVLWLILLLIFSCLRKA). The Cytoplasmic portion of the chain corresponds to 76-141 (AWDYGRLALL…KDEEIRSKCG (66 aa)). Residues 98 to 117 (EQSEKEKTPSDSSPSDSETK) form a disordered region. The chain crosses the membrane as a helical span at residues 142-174 (IDAVTYLSFQRHIILLMMVVCLLSLTIILPVNL). The Extracellular portion of the chain corresponds to 175 to 198 (SGNLLGDNPENFGRTTVVNVPAQN). Residues 199 to 223 (IFLWLHSIFALLYFVITVLCMAHHS) form a helical membrane-spanning segment. At 224-418 (SRLEYREDEK…IIWENLSVCG (195 aa)) the chain is on the cytoplasmic side. The chain crosses the membrane as a helical span at residues 419-448 (PRWWLRCILLNILLFLLLFFLTTPAIIVNT). Topologically, residues 449 to 463 (MDKFNVTRPVESLRN) are extracellular. A helical membrane pass occupies residues 464–493 (PVITQFFPTLLLWAFSILLPFIVYYSSFFE). Over 494-497 (YHWT) the chain is Cytoplasmic. The chain crosses the membrane as a helical span at residues 498-534 (RSGENQVTMHKCFLLLVFMVIILPSLGLSSLNLFFRW). At 535–557 (LFDVRFLDETDVKFQCVFLPDNG) the chain is on the extracellular side. A helical membrane pass occupies residues 558–590 (AFFVNYVITSSLIGTAMELLRIPALLVYSLRLC). The Cytoplasmic segment spans residues 591–610 (FAKSKAECIHVKISQAYEFQ). A helical membrane pass occupies residues 611 to 629 (FGLEYAWTMCIFSVSMTYS). At 630 to 632 (ITC) the chain is on the extracellular side. Residues 633-657 (PVIVPFGLLYLVLKHMVDRYNIYYA) form a helical membrane-spanning segment. Over 658–664 (YTPTKLN) the chain is Cytoplasmic. A helical transmembrane segment spans residues 665-693 (QRIHAAAISQVVVAPILCMFWLLFFSVLR). Residues 694-698 (LGPVQ) are Extracellular-facing. Residues 699–719 (PITLFTFITLLCSIAFSCFGF) form a helical membrane-spanning segment. The Cytoplasmic segment spans residues 720–825 (CMKKLRADRS…LLMDSPVAFQ (106 aa)). The interval 777–825 (SPAHQSYGTMVNSQSSVRDAEEDEEKDLEETLETELKDDLLMDSPVAFQ) is disordered. Residues 779 to 793 (AHQSYGTMVNSQSSV) are compositionally biased toward polar residues. Residues 796 to 809 (AEEDEEKDLEETLE) are compositionally biased toward acidic residues.

It belongs to the CSC1 (TC 1.A.17) family. In terms of assembly, monomer.

The protein localises to the endoplasmic reticulum membrane. Its subcellular location is the cell membrane. It carries out the reaction Ca(2+)(in) = Ca(2+)(out). Acts as an osmosensitive cation channel preferentially activated upon hypotonic stress. In contrast to tmem63b, does not show phospholipid scramblase activity. Required for the functional integrity of the kidney glomerular filtration barrier. This Danio rerio (Zebrafish) protein is Osmosensitive cation channel TMEM63C (tmem63c).